A 582-amino-acid chain; its full sequence is ATP-dependent lipid A-core flippase (582 aa).

The next 5 helical transmembrane spans lie at 16–36 (LWPT…ALIL), 63–83 (VLVW…ITSY), 153–173 (IIGL…ILIV), 253–273 (PIIQ…ASFP), and 275–295 (VMDN…IALM). The 283-residue stretch at 28–310 (IVAGVALILN…LTNVNAQFQR (283 aa)) folds into the ABC transmembrane type-1 domain. Residues 342–578 (VEFRNVTFTY…RGVYAQLHKM (237 aa)) enclose the ABC transporter domain. 376 to 383 (GRSGSGKS) lines the ATP pocket.

It belongs to the ABC transporter superfamily. Lipid exporter (TC 3.A.1.106) family. In terms of assembly, homodimer.

It is found in the cell inner membrane. The enzyme catalyses ATP + H2O + lipid A-core oligosaccharideSide 1 = ADP + phosphate + lipid A-core oligosaccharideSide 2.. Involved in lipopolysaccharide (LPS) biosynthesis. Translocates lipid A-core from the inner to the outer leaflet of the inner membrane. Transmembrane domains (TMD) form a pore in the inner membrane and the ATP-binding domain (NBD) is responsible for energy generation. This is ATP-dependent lipid A-core flippase from Shigella sonnei (strain Ss046).